Reading from the N-terminus, the 620-residue chain is Glutathione-regulated potassium-efflux system protein KefC (620 aa).

The next 12 helical transmembrane spans lie at 4 to 24, 26 to 46, 54 to 74, 90 to 110, 114 to 134, 149 to 169, 178 to 198, 218 to 238, 270 to 290, 294 to 314, 327 to 347, and 359 to 379; these read HTLL…PIAV, LGLG…PWGL, SILH…GLEL, GALQ…FLGL, VAEL…MQAM, FAVL…IPLL, LGAF…VVVL, VFSA…EEVG, GLLL…GTLV, LRIL…LWLV, WFAV…GAAQ, and ALTL…VLLT. Residues 399–518 enclose the RCK N-terminal domain; that stretch reads QPRVIVAGFG…AGVAMPERET (120 aa). Residues 599–620 form a disordered region; it reads QGTAEGKHSGEVADEPEVKPSI.

The protein belongs to the monovalent cation:proton antiporter 2 (CPA2) transporter (TC 2.A.37) family. KefC subfamily. Homodimer. Interacts with the regulatory subunit KefF.

It is found in the cell inner membrane. Pore-forming subunit of a potassium efflux system that confers protection against electrophiles. Catalyzes K(+)/H(+) antiport. The polypeptide is Glutathione-regulated potassium-efflux system protein KefC (Salmonella paratyphi B (strain ATCC BAA-1250 / SPB7)).